We begin with the raw amino-acid sequence, 1224 residues long: MSLRFILGRAGTGKSRACLDEIAQELKGSPQGPPLLFLVPEQATFQTERALATMPGLGGTIRAQVFSFRRLAYRVLQEVGGSARIPIGDLGKRMILRNLLEKHKDELRLFHRSAGQPGFADALAGALSELKLYNIDATSLDRCQTEVIERQGAGLLADKLHDLALLYGALKTFLEGKYTDPDDYLHLLAQRIPGSVMLRDAEVWVDGFAGFTPQELSVLAALMSACRRVNVALCLDPTELDEPCDLDDPFFRTRETQAKLLQLAFDRGIVIEKALHLVPAPGQSAPRFQHPELQHLESFYFRRPAPPWLGGTQSLFVCAAANRRSEVEGAAREIIRLCRDQGYRWRDVAVLLRDLESYYDSIESVFSDFGIPLFIDSKRPAPHHPLVELIRSALEAVLRDWAYEPVFRYLKTDLVPLSRGETDRLENYVLAHGIRGRRWRDREPWLFRRRLTLGEDALSEFSDQELAELAEINGARDRARAALASFHKAVVGAKAVRPITAALYQLLVDLKAPEQISCWIAEAEAAGRIEEAHAHRQVWAAVIDLFDQIVESLGETPLDLATYAVVMEAGLDSLKLSLIPPELDQVFVGSLDRSRCPGIRAAFVLGVSEGVLPARPKDDGIFDDKERERIYALTGLELAPGSRRRLFDEEYHIYVALTRASERCYLSYPLADAEGRAQLPSSVIARVRELFPQVTERTWLLEPGSLPTGAGLSGSAFAGAATAETAAMAQTALAARTTKEAAMSAVERELAEEYIVHPARSLSYLIPSLREALARRPVPLVWWAVYSWLAERPAWRELLARVLSGLWHKNREQDLPKPVSRRLFGDPLRASVSRIERFLACPFSHFISHGLRLKERRIFRLAAPDLGEFFHAALKQFGERLRRDRLDWGALPREELFRLTGEVVSDLAPQLQNEILLSTARHRYLTGRLQQTLSRAVIVLGEHARRGQFRPLALEVGFGPEELLPPVQVPLTGGRWMDLVGRIDRIDGFFVGDASWLRVIDYKSNRANLKLADIAHGLKLQLLAYLDVALRHGNRLLQGCALGEDRPSSLSAATACHPGGMLYFGICDPLLSTGGPLTRDEAERAILKEAKMCGHVLADPAVVAAMDGQTRQGYSPLIPVGLKKEGGFYSASSVLTMEQFALLRQYLQSIVARVGEAILDGLVSIRPHRRDDRLACSFCPYKSVCQFDLLLQDNDYRLLIDDPPEKIWEKIAAGPKAIFEGVIR.

The 326-residue stretch at methionine 1 to glutamate 326 folds into the UvrD-like helicase ATP-binding domain. Glycine 8–serine 15 lines the ATP pocket. The UvrD-like helicase C-terminal domain occupies glutamine 283 to aspartate 584. Positions 841, 1176, 1179, and 1185 each coordinate [4Fe-4S] cluster.

It belongs to the helicase family. AddB/RexB type 1 subfamily. In terms of assembly, heterodimer of AddA and AddB. The cofactor is Mg(2+). Requires [4Fe-4S] cluster as cofactor.

In terms of biological role, the heterodimer acts as both an ATP-dependent DNA helicase and an ATP-dependent, dual-direction single-stranded exonuclease. Recognizes the chi site generating a DNA molecule suitable for the initiation of homologous recombination. The AddB subunit has 5' -&gt; 3' nuclease activity but not helicase activity. This is ATP-dependent helicase/deoxyribonuclease subunit B from Heliobacterium modesticaldum (strain ATCC 51547 / Ice1).